Here is an 88-residue protein sequence, read N- to C-terminus: Large ribosomal subunit protein bL31B (88 aa).

The protein belongs to the bacterial ribosomal protein bL31 family. Type B subfamily. Part of the 50S ribosomal subunit.

The protein is Large ribosomal subunit protein bL31B of Glaesserella parasuis serovar 5 (strain SH0165) (Haemophilus parasuis).